A 495-amino-acid polypeptide reads, in one-letter code: UPF0371 protein cgR_2887 (495 aa).

Belongs to the UPF0371 family.

The polypeptide is UPF0371 protein cgR_2887 (Corynebacterium glutamicum (strain R)).